Reading from the N-terminus, the 64-residue chain is Beta-insect excitatory toxin OdTx12 (64 aa).

The LCN-type CS-alpha/beta domain maps to 1–59; it reads QSTGGKAPECLLSNYCNNECTKVHYADKGYCCLLSCYCFGLSDDKKVLEISDSRKKYCD. 4 disulfide bridges follow: C10–C31, C16–C36, C20–C38, and C32–C58.

Belongs to the long (4 C-C) scorpion toxin superfamily. Sodium channel inhibitor family. Beta subfamily. As to expression, expressed by the venom gland.

It localises to the secreted. Its function is as follows. Excitatory insect beta-toxins induce a spastic paralysis. They bind voltage-independently at site-4 of sodium channels (Nav) and shift the voltage of activation toward more negative potentials thereby affecting sodium channel activation and promoting spontaneous and repetitive firing. In vivo, this recombinant protein is lethal to Locusta migratoria larvae after injection, but has no significant effect when orally administered. Is not toxic to mice after intracerebroventricular injection. The polypeptide is Beta-insect excitatory toxin OdTx12 (Odontobuthus doriae (Yellow Iranian scorpion)).